A 100-amino-acid chain; its full sequence is Small ribosomal subunit protein uS14 (100 aa).

The protein belongs to the universal ribosomal protein uS14 family. Part of the 30S ribosomal subunit. Contacts proteins S3 and S10.

In terms of biological role, binds 16S rRNA, required for the assembly of 30S particles and may also be responsible for determining the conformation of the 16S rRNA at the A site. This Acaryochloris marina (strain MBIC 11017) protein is Small ribosomal subunit protein uS14.